Consider the following 1417-residue polypeptide: DExH-box ATP-dependent RNA helicase DExH4, chloroplastic (1417 aa).

Residues 1 to 12 (MAPTKKPQKNKQ) are compositionally biased toward basic residues. The disordered stretch occupies residues 1-37 (MAPTKKPQKNKQSKNEIASSLIPNSGHKKPSKAPKLL). The transit peptide at 1-61 (MAPTKKPQKN…NFRRTPSPVT (61 aa)) directs the protein to the chloroplast. Residues 607-781 (LQKLKEKDVL…FGQCPIITAQ (175 aa)) enclose the Helicase ATP-binding domain. 620–627 (GETGSGKT) contacts ATP. A DEIH box motif is present at residues 722–725 (DEVH). Positions 868-1043 (LLEELICHID…ELCLHIKLLG (176 aa)) constitute a Helicase C-terminal domain.

Belongs to the DExH box helicase family.

It is found in the plastid. Its subcellular location is the chloroplast. It catalyses the reaction ATP + H2O = ADP + phosphate + H(+). The polypeptide is DExH-box ATP-dependent RNA helicase DExH4, chloroplastic (Arabidopsis thaliana (Mouse-ear cress)).